The following is a 677-amino-acid chain: Methionine--tRNA ligase (677 aa).

A 'HIGH' region motif is present at residues 15–25 (PYANGSIHLGH). Cys146, Cys149, Cys159, and Cys162 together coordinate Zn(2+). The short motif at 333-337 (KMSKS) is the 'KMSKS' region element. Lys336 is an ATP binding site. A tRNA-binding domain is found at 575-677 (DFAKIDLRVA…DGAKPGQQVK (103 aa)).

The protein belongs to the class-I aminoacyl-tRNA synthetase family. MetG type 1 subfamily. As to quaternary structure, homodimer. Zn(2+) is required as a cofactor.

It is found in the cytoplasm. It catalyses the reaction tRNA(Met) + L-methionine + ATP = L-methionyl-tRNA(Met) + AMP + diphosphate. Functionally, is required not only for elongation of protein synthesis but also for the initiation of all mRNA translation through initiator tRNA(fMet) aminoacylation. This Salmonella typhimurium (strain LT2 / SGSC1412 / ATCC 700720) protein is Methionine--tRNA ligase.